Consider the following 131-residue polypeptide: uncharacterized protein (131 aa).

The disordered stretch occupies residues 60-100 (GRHTLSQVPNKGHEKASAVQLPEKQGTDQSRRGPTSAVTKA). Over residues 91–100 (RGPTSAVTKA) the composition is skewed to polar residues.

This is an uncharacterized protein from Homo sapiens (Human).